A 152-amino-acid chain; its full sequence is Protein CHLOROPLAST VESICULATION (152 aa).

The transit peptide at 1-22 (MAGRISCCLNLPPLDSNSAQSL) directs the protein to the chloroplast. A helical membrane pass occupies residues 48 to 65 (CSFVLGVAATVVIGGIQI). Positions 92 to 152 (RWSDKRTCPP…RVNRGGCFSV (61 aa)) are important for chloroplast destabilization and the formation of CV-containing vesicles.

As to quaternary structure, interacts with the photosystem II subunit PsbO1 via its C-terminal region in the chloroplast thylakoid membrane and in CV-containing vesicles (CCVs). As to expression, mostly expressed in senescent and mature leaves but not in young leaves.

It localises to the plastid. The protein localises to the chloroplast membrane. It is found in the chloroplast thylakoid membrane. Its subcellular location is the chloroplast envelope. The protein resides in the vacuole. It localises to the vesicle. Functionally, triggers stress-induced chloroplast degradation, independently of autophagy and senescence-associated vacuoles. After targeting to the chloroplast, triggers its destabilization and subsequent disassembly, inducing the formation of CV-containing vesicles (CCVs) carrying stromal proteins, envelope membrane proteins, and thylakoid membrane proteins which are released from the chloroplasts and mobilized to the vacuole for proteolysis. This chain is Protein CHLOROPLAST VESICULATION, found in Arabidopsis thaliana (Mouse-ear cress).